The primary structure comprises 544 residues: 4-coumarate:CoA ligase 1 (544 aa).

It belongs to the ATP-dependent AMP-binding enzyme family. Monomer. Mostly expressed in flower organs, with highest levels in corollas, and, to a lesser extent, in tubes, sepals, pistils, stamen and ovaries. Also present at low levels in leaves.

Its subcellular location is the cytoplasm. The protein resides in the cytosol. It carries out the reaction (E)-4-coumarate + ATP + CoA = (E)-4-coumaroyl-CoA + AMP + diphosphate. The enzyme catalyses (E)-caffeate + ATP + CoA = (E)-caffeoyl-CoA + AMP + diphosphate. It catalyses the reaction benzoate + ATP + CoA = benzoyl-CoA + AMP + diphosphate. The catalysed reaction is (E)-cinnamate + ATP + CoA = (E)-cinnamoyl-CoA + AMP + diphosphate. It carries out the reaction (E)-ferulate + ATP + CoA = (E)-feruloyl-CoA + AMP + diphosphate. Its pathway is phenylpropanoid metabolism; trans-cinnamate biosynthesis. It functions in the pathway phytoalexin biosynthesis; 3,4',5-trihydroxystilbene biosynthesis; 3,4',5-trihydroxystilbene from trans-4-coumarate: step 1/2. In terms of biological role, catalyzes the formation of CoA esters of trans-cinnamic acid, 4-coumaric acid, ferulic acid, benzoic acid and caffeic acid. The polypeptide is 4-coumarate:CoA ligase 1 (Petunia hybrida (Petunia)).